The chain runs to 85 residues: MNTNHFLKADVPIAKRKIESAEELSIMLSEALRDGDYEEAISLAGSIKVLTEDISRLANKGRLYETALKMQQQGINLTVVSRCIG.

Interacts with domain IV of DnaA and with Spo0A.

Functionally, binds to and counteracts DnaA replication initiation activity; overexpression decreases the number of replication initiation events. Also antagonizes DnaA's transcriptional regulation activity. Ectopic expression during exponential phase stops cell growth 2 hours after induction, leading to filamentation, aberrant chromosome segregation and septoid-trapped nucleoids. Overexpression during sporulation onset leads to dramatic reductions in spore formation. The chain is Small protein YqaH (yqaH) from Bacillus subtilis (strain 168).